The sequence spans 164 residues: 3-isopropylmalate dehydratase small subunit 1 (164 aa).

The protein belongs to the LeuD family. LeuD type 2 subfamily. As to quaternary structure, heterodimer of LeuC and LeuD.

The enzyme catalyses (2R,3S)-3-isopropylmalate = (2S)-2-isopropylmalate. It functions in the pathway amino-acid biosynthesis; L-leucine biosynthesis; L-leucine from 3-methyl-2-oxobutanoate: step 2/4. Functionally, catalyzes the isomerization between 2-isopropylmalate and 3-isopropylmalate, via the formation of 2-isopropylmaleate. In Pyrococcus abyssi (strain GE5 / Orsay), this protein is 3-isopropylmalate dehydratase small subunit 1 (leuD1).